A 60-amino-acid chain; its full sequence is Large ribosomal subunit protein bL32 (60 aa).

Belongs to the bacterial ribosomal protein bL32 family.

The polypeptide is Large ribosomal subunit protein bL32 (Streptococcus mutans serotype c (strain ATCC 700610 / UA159)).